A 239-amino-acid polypeptide reads, in one-letter code: 4-hydroxy-tetrahydrodipicolinate reductase (239 aa).

Residues 8–13 (GSTGKM), 78–80 (GTT), and 102–105 (SANM) contribute to the NAD(+) site. Residue H134 is the Proton donor/acceptor of the active site. Residue H135 coordinates (S)-2,3,4,5-tetrahydrodipicolinate. K138 serves as the catalytic Proton donor. 144–145 (GT) lines the (S)-2,3,4,5-tetrahydrodipicolinate pocket.

The protein belongs to the DapB family.

It is found in the cytoplasm. It carries out the reaction (S)-2,3,4,5-tetrahydrodipicolinate + NAD(+) + H2O = (2S,4S)-4-hydroxy-2,3,4,5-tetrahydrodipicolinate + NADH + H(+). The catalysed reaction is (S)-2,3,4,5-tetrahydrodipicolinate + NADP(+) + H2O = (2S,4S)-4-hydroxy-2,3,4,5-tetrahydrodipicolinate + NADPH + H(+). Its pathway is amino-acid biosynthesis; L-lysine biosynthesis via DAP pathway; (S)-tetrahydrodipicolinate from L-aspartate: step 4/4. In terms of biological role, catalyzes the conversion of 4-hydroxy-tetrahydrodipicolinate (HTPA) to tetrahydrodipicolinate. This chain is 4-hydroxy-tetrahydrodipicolinate reductase, found in Rickettsia africae (strain ESF-5).